The following is a 329-amino-acid chain: tRNA dimethylallyltransferase (329 aa).

12–19 lines the ATP pocket; it reads GPTSVGKT. 14–19 is a substrate binding site; it reads TSVGKT. Positions 37–40 are interaction with substrate tRNA; the sequence is DSRY. The interval 306-329 is disordered; sequence LREESDEGDVAVHQSGGGKEAPRA. The segment covering 320-329 has biased composition (gly residues); sequence SGGGKEAPRA.

It belongs to the IPP transferase family. Monomer. The cofactor is Mg(2+).

It catalyses the reaction adenosine(37) in tRNA + dimethylallyl diphosphate = N(6)-dimethylallyladenosine(37) in tRNA + diphosphate. Functionally, catalyzes the transfer of a dimethylallyl group onto the adenine at position 37 in tRNAs that read codons beginning with uridine, leading to the formation of N6-(dimethylallyl)adenosine (i(6)A). The sequence is that of tRNA dimethylallyltransferase from Thermomicrobium roseum (strain ATCC 27502 / DSM 5159 / P-2).